The chain runs to 192 residues: Guanylate kinase (192 aa).

The 179-residue stretch at 7 to 185 (GLIIILSSPS…TLKKIHEIIV (179 aa)) folds into the Guanylate kinase-like domain. Residue 14–21 (SPSGTGKS) coordinates ATP.

Belongs to the guanylate kinase family.

The protein resides in the cytoplasm. It carries out the reaction GMP + ATP = GDP + ADP. Its function is as follows. Essential for recycling GMP and indirectly, cGMP. This Rickettsia felis (strain ATCC VR-1525 / URRWXCal2) (Rickettsia azadi) protein is Guanylate kinase.